The chain runs to 648 residues: Macrolide export ATP-binding/permease protein MacB (648 aa).

An ABC transporter domain is found at 5 to 243 (LELKDIRRSY…AGGTEPVVNT (239 aa)). 41–48 (GASGSGKS) lines the ATP pocket. The next 4 membrane-spanning stretches (helical) occupy residues 273–293 (LLTM…VVVG), 523–543 (LFLT…VMNI), 576–596 (AVLV…LIAF), and 600–620 (LFLP…AFLC).

Belongs to the ABC transporter superfamily. Macrolide exporter (TC 3.A.1.122) family. Homodimer. Part of the tripartite efflux system MacAB-TolC, which is composed of an inner membrane transporter, MacB, a periplasmic membrane fusion protein, MacA, and an outer membrane component, TolC. The complex forms a large protein conduit and can translocate molecules across both the inner and outer membranes. Interacts with MacA.

Its subcellular location is the cell inner membrane. In terms of biological role, part of the tripartite efflux system MacAB-TolC. MacB is a non-canonical ABC transporter that contains transmembrane domains (TMD), which form a pore in the inner membrane, and an ATP-binding domain (NBD), which is responsible for energy generation. Confers resistance against macrolides. This chain is Macrolide export ATP-binding/permease protein MacB, found in Shigella boydii serotype 4 (strain Sb227).